Here is a 663-residue protein sequence, read N- to C-terminus: DNA topoisomerase 4 subunit B (663 aa).

ATP-binding positions include Tyr-7, Asn-47, Asp-74, 114-120 (GLHGVGA), and Lys-341. Residues 386 to 416 (REAARKAREDARSGKKNKRKDTLLSGKLTPA) are disordered. The segment covering 387-398 (EAARKAREDARS) has biased composition (basic and acidic residues). A Toprim domain is found at 424–538 (NELYLVEGDS…AGRVFIALPP (115 aa)). Positions 430, 503, and 505 each coordinate Mg(2+).

Belongs to the type II topoisomerase family. ParE type 2 subfamily. In terms of assembly, heterotetramer composed of ParC and ParE. It depends on Mg(2+) as a cofactor. Requires Mn(2+) as cofactor. Ca(2+) serves as cofactor.

The enzyme catalyses ATP-dependent breakage, passage and rejoining of double-stranded DNA.. Functionally, topoisomerase IV is essential for chromosome segregation. It relaxes supercoiled DNA. Performs the decatenation events required during the replication of a circular DNA molecule. This chain is DNA topoisomerase 4 subunit B, found in Staphylococcus aureus (strain NCTC 8325 / PS 47).